Consider the following 434-residue polypeptide: Histidinol dehydrogenase (434 aa).

Residues Tyr130, Gln191, and Asn214 each coordinate NAD(+). Residues Ser237, Gln259, and His262 each contribute to the substrate site. Positions 259 and 262 each coordinate Zn(2+). Active-site proton acceptor residues include Glu327 and His328. Substrate contacts are provided by His328, Asp361, Glu415, and His420. Asp361 provides a ligand contact to Zn(2+). His420 contributes to the Zn(2+) binding site.

Belongs to the histidinol dehydrogenase family. Requires Zn(2+) as cofactor.

The catalysed reaction is L-histidinol + 2 NAD(+) + H2O = L-histidine + 2 NADH + 3 H(+). It participates in amino-acid biosynthesis; L-histidine biosynthesis; L-histidine from 5-phospho-alpha-D-ribose 1-diphosphate: step 9/9. Catalyzes the sequential NAD-dependent oxidations of L-histidinol to L-histidinaldehyde and then to L-histidine. This is Histidinol dehydrogenase from Chromobacterium violaceum (strain ATCC 12472 / DSM 30191 / JCM 1249 / CCUG 213 / NBRC 12614 / NCIMB 9131 / NCTC 9757 / MK).